Here is a 174-residue protein sequence, read N- to C-terminus: Large ribosomal subunit protein bL17 (174 aa).

This sequence belongs to the bacterial ribosomal protein bL17 family. Part of the 50S ribosomal subunit. Contacts protein L32.

The chain is Large ribosomal subunit protein bL17 from Ruminiclostridium cellulolyticum (strain ATCC 35319 / DSM 5812 / JCM 6584 / H10) (Clostridium cellulolyticum).